The sequence spans 215 residues: Probable phosphoglycerate mutase GpmB (215 aa).

Substrate is bound by residues 8–15, 21–22, Arg58, Lys60, 82–85, 104–105, and 151–152; these read RHGETQWN, QG, ELDM, RR, and GI. The active-site Tele-phosphohistidine intermediate is His9. Glu82 acts as the Proton donor/acceptor in catalysis.

Belongs to the phosphoglycerate mutase family. GpmB subfamily.

It catalyses the reaction (2R)-2-phosphoglycerate = (2R)-3-phosphoglycerate. It functions in the pathway carbohydrate degradation; glycolysis; pyruvate from D-glyceraldehyde 3-phosphate: step 3/5. In Salmonella typhi, this protein is Probable phosphoglycerate mutase GpmB.